We begin with the raw amino-acid sequence, 477 residues long: UDP-galactose-lipid carrier transferase (477 aa).

Helical transmembrane passes span 16–36, 52–72, 93–113, 115–135, 175–195, and 284–304; these read SLAL…IVLI, LDLK…WFWV, TILI…WELS, WIWI…RACV, VIAF…GVPV, and FDLV…VILI. Over 305–477 the chain is Cytoplasmic; the sequence is FMVSRDGGAP…GVVLKRDGAY (173 aa).

Belongs to the bacterial sugar transferase family.

The protein localises to the cell membrane. It participates in glycan metabolism; exopolysaccharide biosynthesis. Its function is as follows. Involved in the biosynthesis of amylovoran which functions as a virulence factor. May act as a sugar transferase and may be involved in the export of the repeating unit by flipping the lipid carrier to the periplasmic face of the inner membrane. The polypeptide is UDP-galactose-lipid carrier transferase (amsG) (Erwinia amylovora (Fire blight bacteria)).